The sequence spans 325 residues: UPF0285 protein MA_3856 (325 aa).

Belongs to the UPF0285 family.

The sequence is that of UPF0285 protein MA_3856 from Methanosarcina acetivorans (strain ATCC 35395 / DSM 2834 / JCM 12185 / C2A).